We begin with the raw amino-acid sequence, 195 residues long: Imidazoleglycerol-phosphate dehydratase (195 aa).

It belongs to the imidazoleglycerol-phosphate dehydratase family.

The protein resides in the cytoplasm. It carries out the reaction D-erythro-1-(imidazol-4-yl)glycerol 3-phosphate = 3-(imidazol-4-yl)-2-oxopropyl phosphate + H2O. The protein operates within amino-acid biosynthesis; L-histidine biosynthesis; L-histidine from 5-phospho-alpha-D-ribose 1-diphosphate: step 6/9. The chain is Imidazoleglycerol-phosphate dehydratase from Campylobacter curvus (strain 525.92).